Here is an 886-residue protein sequence, read N- to C-terminus: Vam6/Vps39-like protein (886 aa).

One can recognise a CNH domain in the interval 15 to 294 (PLQIDCLAAW…RFITSGGSNI (280 aa)). Residues 573-750 (FTEDLPEVES…LLRMYLSPPS (178 aa)) form a CHCR repeat.

This sequence belongs to the VAM6/VPS39 family. As to quaternary structure, homooligomer. Interacts with TGFBR2 and, less efficiently, with TGFBR1; interaction with TGFBR2 is independent of the receptor kinase activity and of the presence of TGF-beta. Also interacts with ACVR2B, but not with BMPR2. Interacts with SMAD4, preferentially following TGF-beta treatment. Component of the putative homotypic fusion and vacuole protein sorting (HOPS) complex; the core of which composed of the class C Vps proteins VPS11, VPS16, VPS18 and VPS33A, is associated with VPS39 and VPS41. Interacts with PLEKHM2; involved in VPS39 recruitment to ARL8B-containing lysosomes. Associates with adapter protein complex 3 (AP-3) and clathrin:AP-3 complexes. Interacts with STX17; this interaction is increased in the absence of TMEM39A. Interacts with RAB7, RAB2A and RAB2B. Interacts with RAB2A (GTP-bound); the interaction contributes to obtaining a functional HOPS complex that promotes autophagosome-lysosome membrane fusion driven by STX17-SNAP29-VAMP8. Interacts with RAB39A (GTP-bound) and RAB39B (GTP-bound); interaction with RAB39A contributes to obtaining a functional HOPS complex.

It is found in the cytoplasm. It localises to the lysosome membrane. The protein localises to the late endosome membrane. Its function is as follows. Regulator of TGF-beta/activin signaling, inhibiting SMAD3- and activating SMAD2-dependent transcription. Acts by interfering with SMAD3/SMAD4 complex formation, this would lead to inhibition of SMAD3-dependent transcription and relieve SMAD3 inhibition of SMAD2-dependent promoters, thus increasing SMAD2-dependent transcription. Functionally, plays a role in vesicle-mediated protein trafficking to lysosomal compartments including the endocytic membrane transport and autophagic pathways. Acts as a component of the HOPS endosomal tethering complex which is proposed to be involved in the Rab5-to-Rab7 endosome conversion probably implicating MON1A/B, and via binding SNAREs and SNARE complexes to mediate tethering and docking events during SNARE-mediated membrane fusion. The HOPS complex is proposed to be recruited to Rab7 on the late endosomal membrane and to regulate late endocytic, phagocytic and autophagic traffic towards lysosomes. Involved in homotypic vesicle fusions between late endosomes and in heterotypic fusions between late endosomes and lysosomes. Required for fusion of endosomes and autophagosomes with lysosomes. The protein is Vam6/Vps39-like protein of Mus musculus (Mouse).